The primary structure comprises 89 residues: cAMP-regulated phosphoprotein 21 (89 aa).

The tract at residues 1–89 (MSEPGDLSQT…GGESLQDQTL (89 aa)) is disordered. Serine 2 is subject to N-acetylserine. A phosphoserine mark is found at serine 33 and serine 56.

As to quaternary structure, interacts with CALM1. Phosphorylation at Ser-56 favors interaction with CALM1.

It is found in the cytoplasm. Its function is as follows. May act as a competitive inhibitor of calmodulin-dependent enzymes such as calcineurin in neurons. The protein is cAMP-regulated phosphoprotein 21 (ARPP21) of Bos taurus (Bovine).